A 398-amino-acid polypeptide reads, in one-letter code: Arylacetamide deacetylase (398 aa).

Over 1-5 (MGRTI) the chain is Cytoplasmic. Residues 6–26 (FLLISVVLVAYYIYIPLPDDI) traverse the membrane as a helical; Signal-anchor for type II membrane protein segment. At 27–398 (EEPWKIILGN…QYLNWLHKNL (372 aa)) the chain is on the lumenal side. N-linked (GlcNAc...) asparagine glycosylation is present at asparagine 77. The Involved in the stabilization of the negatively charged intermediate by the formation of the oxyanion hole signature appears at 110–112 (HGG). A disulfide bond links cysteine 115 and cysteine 339. Residue serine 188 is part of the active site. N-linked (GlcNAc...) asparagine glycans are attached at residues asparagine 192, asparagine 281, and asparagine 324. Active-site residues include aspartate 342 and histidine 372.

This sequence belongs to the 'GDXG' lipolytic enzyme family. In terms of tissue distribution, highest levels in liver with lower levels in jejunum, kidney and testis.

The protein resides in the endoplasmic reticulum membrane. It localises to the microsome membrane. The catalysed reaction is a triacylglycerol + H2O = a diacylglycerol + a fatty acid + H(+). Functionally, displays cellular triglyceride lipase activity in liver, increases the levels of intracellular fatty acids derived from the hydrolysis of newly formed triglyceride stores and plays a role in very low-density lipoprotein assembly. Displays serine esterase activity in liver. Deacetylates a variety of arylacetamide substrates, including xenobiotic compounds and procarcinogens, converting them to the primary arylamide compounds and increasing their toxicity. The chain is Arylacetamide deacetylase (Aadac) from Rattus norvegicus (Rat).